The following is a 197-amino-acid chain: 3-isopropylmalate dehydratase small subunit (197 aa).

The protein belongs to the LeuD family. LeuD type 1 subfamily. In terms of assembly, heterodimer of LeuC and LeuD.

It catalyses the reaction (2R,3S)-3-isopropylmalate = (2S)-2-isopropylmalate. Its pathway is amino-acid biosynthesis; L-leucine biosynthesis; L-leucine from 3-methyl-2-oxobutanoate: step 2/4. In terms of biological role, catalyzes the isomerization between 2-isopropylmalate and 3-isopropylmalate, via the formation of 2-isopropylmaleate. This is 3-isopropylmalate dehydratase small subunit from Acidothermus cellulolyticus (strain ATCC 43068 / DSM 8971 / 11B).